A 409-amino-acid polypeptide reads, in one-letter code: DNA double-strand break repair protein Mre11 (409 aa).

Residues Asp-9, His-11, Asp-50, and Glu-85 each coordinate Mn(2+). His-86 serves as the catalytic Proton donor. Mn(2+)-binding residues include His-170, His-199, and His-201.

It belongs to the MRE11/RAD32 family. As to quaternary structure, homodimer. Forms a heterotetramer composed of two Mre11 subunits and two Rad50 subunits. The cofactor is Mn(2+).

Nuclease activity is regulated by Rad50. Its function is as follows. Part of the Rad50/Mre11 complex, which is involved in the early steps of DNA double-strand break (DSB) repair. The complex may facilitate opening of the processed DNA ends to aid in the recruitment of HerA and NurA. Mre11 binds to DSB ends and has both double-stranded 3'-5' exonuclease activity and single-stranded endonuclease activity. This chain is DNA double-strand break repair protein Mre11, found in Aeropyrum pernix (strain ATCC 700893 / DSM 11879 / JCM 9820 / NBRC 100138 / K1).